Reading from the N-terminus, the 391-residue chain is uncharacterized protein (391 aa).

The 141-residue stretch at 247–387 folds into the Flavodoxin-like domain; sequence AVIVYATIYS…KIKEFGRKLA (141 aa).

This is an uncharacterized protein from Methanocaldococcus jannaschii (strain ATCC 43067 / DSM 2661 / JAL-1 / JCM 10045 / NBRC 100440) (Methanococcus jannaschii).